Here is a 1001-residue protein sequence, read N- to C-terminus: Serine/threonine-protein kinase TAO1-B (1001 aa).

One can recognise a Protein kinase domain in the interval phenylalanine 28 to valine 281. ATP-binding positions include isoleucine 34 to valine 42 and lysine 57. The active-site Proton acceptor is aspartate 151. 2 disordered regions span residues proline 324 to arginine 435 and lysine 567 to serine 586. Residues serine 350–serine 370 show a composition bias toward low complexity. Basic and acidic residues-rich tracts occupy residues serine 375–histidine 388 and proline 577–serine 586. 2 coiled-coil regions span residues serine 458 to methionine 651 and lysine 754 to alanine 877. The tract at residues serine 911 to threonine 1001 is disordered. Over residues histidine 921 to proline 930 the composition is skewed to low complexity. Composition is skewed to polar residues over residues glycine 949–glutamine 967 and glycine 975–threonine 1001.

The protein belongs to the protein kinase superfamily. STE Ser/Thr protein kinase family. STE20 subfamily.

The protein resides in the cytoplasm. The catalysed reaction is L-seryl-[protein] + ATP = O-phospho-L-seryl-[protein] + ADP + H(+). It catalyses the reaction L-threonyl-[protein] + ATP = O-phospho-L-threonyl-[protein] + ADP + H(+). In terms of biological role, serine/threonine-protein kinase involved in various processes such as p38/mapk14 stress-activated MAPK cascade, DNA damage response and regulation of cytoskeleton stability. Acts as an activator of the p38/MAPK14 stress-activated MAPK cascade by mediating phosphorylation and subsequent activation of upstream MAP kinase kinases. In response to DNA damage, involved in the G2/M transition DNA damage checkpoint by activating the p38/MAPK14 stress-activated MAPK cascade. In Xenopus laevis (African clawed frog), this protein is Serine/threonine-protein kinase TAO1-B (taok1-b).